A 140-amino-acid chain; its full sequence is Endoribonuclease YbeY (140 aa).

Residues His-99, His-103, and His-109 each coordinate Zn(2+).

It belongs to the endoribonuclease YbeY family. It depends on Zn(2+) as a cofactor.

It localises to the cytoplasm. Its function is as follows. Single strand-specific metallo-endoribonuclease involved in late-stage 70S ribosome quality control and in maturation of the 3' terminus of the 16S rRNA. This is Endoribonuclease YbeY from Wolinella succinogenes (strain ATCC 29543 / DSM 1740 / CCUG 13145 / JCM 31913 / LMG 7466 / NCTC 11488 / FDC 602W) (Vibrio succinogenes).